We begin with the raw amino-acid sequence, 853 residues long: ATP-dependent zinc metalloprotease FtsH (853 aa).

At 1–5 (MKNKK) the chain is on the cytoplasmic side. A helical transmembrane segment spans residues 6–26 (YLQFGGIAAVILIVLFLVSLF). Topologically, residues 27–113 (SSDTRNFQEV…SYTTNVTQES (87 aa)) are extracellular. A helical membrane pass occupies residues 114–134 (FLMSMLSFILPMVIIFGLLMF). Residues 135 to 853 (FLTRMQGGGM…NPENEGDNRG (719 aa)) lie on the Cytoplasmic side of the membrane. 205–212 (GPPGTGKT) contributes to the ATP binding site. Residue His-427 coordinates Zn(2+). Glu-428 is an active-site residue. His-431 and Asp-503 together coordinate Zn(2+). 2 stretches are compositionally biased toward basic and acidic residues: residues 619–632 (ESTR…REPV) and 639–648 (ALERGEEPPK). The segment at 619–853 (ESTRFPRQEN…NPENEGDNRG (235 aa)) is disordered. Residues 677-695 (PASSAGVAPAAGAAAGSYG) show a composition bias toward low complexity. 2 stretches are compositionally biased toward polar residues: residues 728 to 739 (TPAQAPEQSPDS) and 770 to 788 (MDQS…QESP). Over residues 796–813 (LPDHERSDYPEKAQKESV) the composition is skewed to basic and acidic residues.

It in the central section; belongs to the AAA ATPase family. The protein in the C-terminal section; belongs to the peptidase M41 family. Homohexamer. It depends on Zn(2+) as a cofactor.

Its subcellular location is the cell membrane. Its function is as follows. Acts as a processive, ATP-dependent zinc metallopeptidase for both cytoplasmic and membrane proteins. Plays a role in the quality control of integral membrane proteins. The polypeptide is ATP-dependent zinc metalloprotease FtsH (Corynebacterium glutamicum (strain ATCC 13032 / DSM 20300 / JCM 1318 / BCRC 11384 / CCUG 27702 / LMG 3730 / NBRC 12168 / NCIMB 10025 / NRRL B-2784 / 534)).